The chain runs to 109 residues: Spermidine export protein MdtI (109 aa).

4 consecutive transmembrane segments (helical) span residues W6 to L26, C36 to V56, A64 to F84, and L88 to F108.

The protein belongs to the drug/metabolite transporter (DMT) superfamily. Small multidrug resistance (SMR) (TC 2.A.7.1) family. MdtI subfamily. Forms a complex with MdtJ.

The protein localises to the cell inner membrane. Catalyzes the excretion of spermidine. The protein is Spermidine export protein MdtI of Salmonella paratyphi A (strain ATCC 9150 / SARB42).